Reading from the N-terminus, the 190-residue chain is Transcription antitermination protein NusB (190 aa).

Residues 158-190 (AGTSEDHVPQREPAAGQLGQDDSNGGQVAAVCR) are disordered.

Belongs to the NusB family.

Its function is as follows. Involved in transcription antitermination. Required for transcription of ribosomal RNA (rRNA) genes. Binds specifically to the boxA antiterminator sequence of the ribosomal RNA (rrn) operons. The chain is Transcription antitermination protein NusB from Mycobacterium leprae (strain TN).